The chain runs to 213 residues: Motile sperm domain-containing protein 1 (213 aa).

An MSP domain is found at 16–143 (PVFVFPTELI…KEHLTESVFF (128 aa)). The next 2 membrane-spanning stretches (helical) occupy residues 159 to 179 (SLLTVFLGVVCIAALMLPTLG) and 191 to 211 (LSVNQKLVAAYILGLITMAIL). Positions 205-208 (LITM) match the Nuclear export signal motif.

The protein localises to the endoplasmic reticulum membrane. The protein resides in the golgi apparatus membrane. Plays a role in differentiation and/or proliferation of mesenchymal stem cells. Proposed to be involved in epithelial-to-mesenchymal transition (EMT). However, another study suggests that it is not required for EMT or stem cell self-renewal and acts during later stages of differentiation. In Rattus norvegicus (Rat), this protein is Motile sperm domain-containing protein 1 (Mospd1).